Consider the following 317-residue polypeptide: o-succinylbenzoate synthase (317 aa).

2-succinylbenzoate contacts are provided by residues 71–73 (NAT) and Lys95. Lys97 (proton donor) is an active-site residue. Residues Asp128, Glu154, and Asp177 each coordinate Mg(2+). 128 to 130 (DVN) provides a ligand contact to 2-succinylbenzoate. A 2-succinylbenzoate-binding site is contributed by Lys201. Residue Lys201 is the Proton acceptor of the active site.

It belongs to the mandelate racemase/muconate lactonizing enzyme family. MenC type 1 subfamily. Monomer. A divalent metal cation is required as a cofactor.

The catalysed reaction is (1R,6R)-6-hydroxy-2-succinyl-cyclohexa-2,4-diene-1-carboxylate = 2-succinylbenzoate + H2O. It functions in the pathway quinol/quinone metabolism; 1,4-dihydroxy-2-naphthoate biosynthesis; 1,4-dihydroxy-2-naphthoate from chorismate: step 4/7. The protein operates within quinol/quinone metabolism; menaquinone biosynthesis. Functionally, converts 2-succinyl-6-hydroxy-2,4-cyclohexadiene-1-carboxylate (SHCHC) to 2-succinylbenzoate (OSB). Does not show N-succinylamino acid racemase (NSAR) activity with N-succinyl-L-phenylglycine as substrate. This Thermobifida fusca (strain YX) protein is o-succinylbenzoate synthase.